Reading from the N-terminus, the 136-residue chain is Ig kappa chain V-V region MOPC 21 (136 aa).

Residues 1-29 (MHQTSMGIKMESHTLVFISILLCLYGADG) form the signal peptide. Residues 30-52 (NIVMTQSPKSMSMSVGERVTLTC) are framework-1. Positions 53 to 63 (KASENVVTYVS) are complementarity-determining-1. The tract at residues 64–78 (WYQQKPEQSPKLLIY) is framework-2. The interval 79–85 (GASNRYT) is complementarity-determining-2. Residues 86–117 (GVPDRFTGSGSATDFTLTISSVQAEDLADYHC) are framework-3. The segment at 118–126 (GQGYSYPYT) is complementarity-determining-3. The segment at 127–136 (FGGGTKLEIK) is framework-4.

The sequence is that of Ig kappa chain V-V region MOPC 21 from Mus musculus (Mouse).